A 378-amino-acid chain; its full sequence is Acyl-coenzyme A diphosphatase NUDT19 (378 aa).

One can recognise a Nudix hydrolase domain in the interval 7–258 (HWREAASVLL…EIWLAPPQFY (252 aa)). A Nudix box motif is present at residues 105-126 (SPLPGEVAFRICAIRETFEEAG). Residues glutamate 120 and glutamate 124 each contribute to the Mg(2+) site. The Microbody targeting signal signature appears at 376-378 (SRL).

This sequence belongs to the Nudix hydrolase family. Monomer. Requires Mg(2+) as cofactor. The cofactor is Mn(2+).

Its subcellular location is the peroxisome. It catalyses the reaction an acyl-CoA + H2O = an acyl-4'-phosphopantetheine + adenosine 3',5'-bisphosphate + 2 H(+). The catalysed reaction is CoA + H2O = (R)-4'-phosphopantetheine + adenosine 3',5'-bisphosphate + 2 H(+). It carries out the reaction hexanoyl-CoA + H2O = hexanoyl-4'-phosphopantetheine + adenosine 3',5'-bisphosphate + 2 H(+). The enzyme catalyses octanoyl-CoA + H2O = S-octanoyl-4'-phosphopantetheine + adenosine 3',5'-bisphosphate + 2 H(+). It catalyses the reaction butanoyl-CoA + H2O = S-butanoyl-4'-phosphopantetheine + adenosine 3',5'-bisphosphate + 2 H(+). The catalysed reaction is propanoyl-CoA + H2O = propanoyl-4'-phosphopantetheine + adenosine 3',5'-bisphosphate + 2 H(+). It carries out the reaction malonyl-CoA + H2O = malonyl-4'-phosphopantetheine + adenosine 3',5'-bisphosphate + 2 H(+). The enzyme catalyses succinyl-CoA + H2O = succinyl-4'-phosphopantetheine + adenosine 3',5'-bisphosphate + 2 H(+). It catalyses the reaction choloyl-CoA + H2O = S-choloyl-4'-phosphopantetheine + adenosine 3',5'-bisphosphate + 2 H(+). The catalysed reaction is 4,8-dimethylnonanoyl-CoA + H2O = S-(4,8-dimethylnonanoyl)-4'-phosphopantetheine + adenosine 3',5'-bisphosphate + 2 H(+). It carries out the reaction (9Z,12Z,15Z)-octadecatrienoyl-CoA + H2O = S-(9Z,12Z,15Z-octadecatrienoyl)-4'-phosphopantetheine + adenosine 3',5'-bisphosphate + 2 H(+). The enzyme catalyses (9Z,12Z)-octadecadienoyl-CoA + H2O = S-(9Z,12Z-octadecadienoyl)-4'-phosphopantetheine + adenosine 3',5'-bisphosphate + 2 H(+). It catalyses the reaction (9Z)-hexadecenoyl-CoA + H2O = S-(9Z-hexadecenoyl)-4'-phosphopantetheine + adenosine 3',5'-bisphosphate + 2 H(+). The catalysed reaction is (9Z)-tetradecenoyl-CoA + H2O = S-(9Z-tetradecenoyl)-4'-phosphopantetheine + adenosine 3',5'-bisphosphate + 2 H(+). It carries out the reaction (6Z)-octenoyl-CoA + H2O = S-(6Z-octenoyl)-4'-phosphopantetheine + adenosine 3',5'-bisphosphate + 2 H(+). The enzyme catalyses hexadecanoyl-CoA + H2O = S-hexadecanoyl-4'-phosphopantetheine + adenosine 3',5'-bisphosphate + 2 H(+). It catalyses the reaction tetradecanoyl-CoA + H2O = tetradecanoyl-4'-phosphopantetheine + adenosine 3',5'-bisphosphate + 2 H(+). The catalysed reaction is dodecanoyl-CoA + H2O = S-dodecanoyl-4'-phosphopantetheine + adenosine 3',5'-bisphosphate + 2 H(+). It carries out the reaction a 5'-end CoA-ribonucleoside in mRNA + H2O = a 5'-end phospho-adenosine-phospho-ribonucleoside in mRNA + (R)-4'-phosphopantetheine + 2 H(+). In terms of biological role, fatty acyl-coenzyme A (CoA) diphosphatase that hydrolyzes fatty acyl-CoA to yield acyl-4'-phosphopantetheine and adenosine 3',5'-bisphosphate. Mediates the hydrolysis of a wide range of CoA esters, including choloyl-CoA and branched-chain fatty-acyl-CoA esters and at low substrate concentrations medium and long-chain fatty-acyl-CoA esters are the primary substrates. Highest activity seen with medium-chain acyl-CoA esters and higher rates of activity seen with the unsaturated acyl-CoA esters compared with the saturated esters. Exhibits decapping activity towards dpCoA-capped RNAs in vitro. The chain is Acyl-coenzyme A diphosphatase NUDT19 (NUDT19) from Gallus gallus (Chicken).